The following is a 326-amino-acid chain: Organic solute transporter subunit alpha (326 aa).

The Extracellular portion of the chain corresponds to 1 to 28 (METSNFTLFDPRCRAEAPFAIDAIKQLD). Asparagine 5 carries N-linked (GlcNAc...) asparagine glycosylation. Residues 29–49 (IFGKVLYTVLTLMATASMLVF) traverse the membrane as a helical segment. At 50–67 (IEECIYIYKKVPAHKKST) the chain is on the cytoplasmic side. Residues 68-88 (IIWVTGVAPVMAIMSCLGMWV) form a helical membrane-spanning segment. The Extracellular portion of the chain corresponds to 89–99 (PRATMFTDMTS). Residues 100–120 (ATYFAIVVFKFLILMIEEVGG) traverse the membrane as a helical segment. Over 121-161 (DNAFLRRCEKQTFKISTGPCCCCCPCLPNVPITRRSLFILK) the chain is Cytoplasmic. A helical transmembrane segment spans residues 162–182 (LGSYQFALMKLVLTIFSIVLW). At 183–198 (TNGSFSLTNVSASGAA) the chain is on the extracellular side. N-linked (GlcNAc...) asparagine glycans are attached at residues asparagine 184 and asparagine 191. A helical transmembrane segment spans residues 199 to 219 (IWINSFIGVLTIIALWPVAIM). The Cytoplasmic portion of the chain corresponds to 220 to 237 (FMHVREALRTLKIVPKYA). A helical transmembrane segment spans residues 238-258 (MYQLVLILSQLQTAIINILAL). N-linked (GlcNAc...) asparagine glycosylation is present at asparagine 259. Residues 259 to 275 (NGTIACSPPYSSQARGY) lie on the Extracellular side of the membrane. Residues 276–296 (MMSQQLLIVEMFIITLVTRVL) form a helical membrane-spanning segment. Over 297 to 326 (YRRQYEPIPEPDDVEEKKTVLSSKKAIDVA) the chain is Cytoplasmic.

It belongs to the OST-alpha family. As to quaternary structure, interacts with slc51b. The Ost-alpha/Ost-beta complex is a heterodimer composed of alpha (slc51a) and beta (slc51b) subunit.

The protein resides in the cell membrane. It localises to the endoplasmic reticulum membrane. The catalysed reaction is taurocholate(out) = taurocholate(in). It catalyses the reaction prostaglandin E2(out) = prostaglandin E2(in). The enzyme catalyses estrone 3-sulfate(out) = estrone 3-sulfate(in). It carries out the reaction dehydroepiandrosterone 3-sulfate(out) = dehydroepiandrosterone 3-sulfate(in). The catalysed reaction is tauroursodeoxycholate(out) = tauroursodeoxycholate(in). It catalyses the reaction glycoursodeoxycholate(out) = glycoursodeoxycholate(in). The enzyme catalyses glycocholate(out) = glycocholate(in). It carries out the reaction taurochenodeoxycholate(out) = taurochenodeoxycholate(in). The catalysed reaction is glycochenodeoxycholate(out) = glycochenodeoxycholate(in). It catalyses the reaction taurodeoxycholate(out) = taurodeoxycholate(in). The enzyme catalyses glycodeoxycholate(out) = glycodeoxycholate(in). In terms of biological role, essential component of the Ost-alpha/Ost-beta complex, a heterodimer that acts as the intestinal basolateral transporter responsible for the translocation of bile acids (such as taurocholate), steroids (such as estrone sulfate), and eicosanoids (such as prostaglandin E2). In Danio rerio (Zebrafish), this protein is Organic solute transporter subunit alpha (slc51a).